The primary structure comprises 870 residues: DNA topoisomerase 1 (870 aa).

Positions 1–128 (MKSPRFRHSQ…RVYKSSFEAA (128 aa)) constitute a Toprim domain. Residues 143–578 (YDGLAYSAKA…QTNAFVQKIT (436 aa)) enclose the Topo IA-type catalytic domain. The interval 180–185 (SSGRVQ) is interaction with DNA. Residue tyrosine 299 is the O-(5'-phospho-DNA)-tyrosine intermediate of the active site. 3 C4-type zinc fingers span residues 603–627 (CQCP…HPNC), 693–717 (CPKC…QNGC), and 784–807 (CPLC…KRGC).

It belongs to the type IA topoisomerase family. Monomer.

The catalysed reaction is ATP-independent breakage of single-stranded DNA, followed by passage and rejoining.. Functionally, releases the supercoiling and torsional tension of DNA, which is introduced during the DNA replication and transcription, by transiently cleaving and rejoining one strand of the DNA duplex. Introduces a single-strand break via transesterification at a target site in duplex DNA. The scissile phosphodiester is attacked by the catalytic tyrosine of the enzyme, resulting in the formation of a DNA-(5'-phosphotyrosyl)-enzyme intermediate and the expulsion of a 3'-OH DNA strand. The free DNA strand then undergoes passage around the unbroken strand, thus removing DNA supercoils. Finally, in the religation step, the DNA 3'-OH attacks the covalent intermediate to expel the active-site tyrosine and restore the DNA phosphodiester backbone. The protein is DNA topoisomerase 1 (topX) of Bacillus anthracis.